We begin with the raw amino-acid sequence, 119 residues long: Small ribosomal subunit protein uS10 (119 aa).

The protein belongs to the universal ribosomal protein uS10 family. In terms of assembly, component of the small ribosomal subunit. Mature ribosomes consist of a small (40S) and a large (60S) subunit. The 40S subunit contains about 32 different proteins and 1 molecule of RNA (18S). The 60S subunit contains 45 different proteins and 3 molecules of RNA (25S, 5.8S and 5S).

Its subcellular location is the cytoplasm. In terms of biological role, component of the ribosome, a large ribonucleoprotein complex responsible for the synthesis of proteins in the cell. The small ribosomal subunit (SSU) binds messenger RNAs (mRNAs) and translates the encoded message by selecting cognate aminoacyl-transfer RNA (tRNA) molecules. The large subunit (LSU) contains the ribosomal catalytic site termed the peptidyl transferase center (PTC), which catalyzes the formation of peptide bonds, thereby polymerizing the amino acids delivered by tRNAs into a polypeptide chain. The nascent polypeptides leave the ribosome through a tunnel in the LSU and interact with protein factors that function in enzymatic processing, targeting, and the membrane insertion of nascent chains at the exit of the ribosomal tunnel. This chain is Small ribosomal subunit protein uS10 (RPS20), found in Candida albicans (strain SC5314 / ATCC MYA-2876) (Yeast).